Here is a 152-residue protein sequence, read N- to C-terminus: Large ribosomal subunit protein uL30 (152 aa).

The protein belongs to the universal ribosomal protein uL30 family. As to quaternary structure, part of the 50S ribosomal subunit.

The chain is Large ribosomal subunit protein uL30 from Methanobrevibacter smithii (strain ATCC 35061 / DSM 861 / OCM 144 / PS).